The primary structure comprises 474 residues: Cysteine--tRNA ligase (474 aa).

Cys-27 contacts Zn(2+). Residues 29 to 39 carry the 'HIGH' region motif; that stretch reads ITPYDHMHVGH. Cys-213, His-238, and Glu-242 together coordinate Zn(2+). The 'KMSKS' region signature appears at 271–275; it reads KMSKS. Lys-274 contributes to the ATP binding site.

The protein belongs to the class-I aminoacyl-tRNA synthetase family. Requires Zn(2+) as cofactor.

It is found in the cytoplasm. It catalyses the reaction tRNA(Cys) + L-cysteine + ATP = L-cysteinyl-tRNA(Cys) + AMP + diphosphate. The sequence is that of Cysteine--tRNA ligase from Pyrobaculum neutrophilum (strain DSM 2338 / JCM 9278 / NBRC 100436 / V24Sta) (Thermoproteus neutrophilus).